The sequence spans 111 residues: Cytochrome c (111 aa).

An N-acetylalanine modification is found at Ala-1. Residues Cys-22, Cys-25, and His-26 each contribute to the heme c site. Lys-80 carries the post-translational modification N6,N6,N6-trimethyllysine. Position 88 (Met-88) interacts with heme c. Residue Lys-94 is modified to N6,N6,N6-trimethyllysine.

This sequence belongs to the cytochrome c family. In terms of processing, binds 1 heme c group covalently per subunit.

It localises to the mitochondrion intermembrane space. In terms of biological role, electron carrier protein. The oxidized form of the cytochrome c heme group can accept an electron from the heme group of the cytochrome c1 subunit of cytochrome reductase. Cytochrome c then transfers this electron to the cytochrome oxidase complex, the final protein carrier in the mitochondrial electron-transport chain. This Gossypium barbadense (Sea Island cotton) protein is Cytochrome c.